Here is a 95-residue protein sequence, read N- to C-terminus: Co-chaperonin GroES (95 aa).

Belongs to the GroES chaperonin family. In terms of assembly, heptamer of 7 subunits arranged in a ring. Interacts with the chaperonin GroEL.

It is found in the cytoplasm. Together with the chaperonin GroEL, plays an essential role in assisting protein folding. The GroEL-GroES system forms a nano-cage that allows encapsulation of the non-native substrate proteins and provides a physical environment optimized to promote and accelerate protein folding. GroES binds to the apical surface of the GroEL ring, thereby capping the opening of the GroEL channel. The protein is Co-chaperonin GroES of Cereibacter sphaeroides (strain KD131 / KCTC 12085) (Rhodobacter sphaeroides).